A 620-amino-acid chain; its full sequence is Cilia- and flagella-associated protein 52 (620 aa).

WD repeat units lie at residues 62–106, 109–150, 156–195, 288–327, 330–369, 372–411, 415–454, 459–498, 500–539, 543–582, and 585–620; these read GHGN…LLAR, LHKG…AICG, LNVG…RKIW, QLQG…ETLI, CHFD…ELLR, VPNM…LMYV, AHRI…QKLE, EHKS…RNQM, LANT…VIRE, SLSG…VTHV, and GHSG…PYTS.

This sequence belongs to the CFAP52 family. In terms of assembly, microtubule inner protein component of sperm flagellar doublet microtubules. Interacts with BRCA2. Interacts with the CCT chaperonin complex. Interacts with HSP70. Interacts with AK8. Interacts with CFAP45. Interacts with DNAI1. Interacts with IQDC. In terms of tissue distribution, expressed in respiratory cells and sperm (at protein level). Highly expressed in testis. Up-regulated in hepatocellular carcinoma (HCC).

It localises to the cytoplasm. The protein resides in the cytoskeleton. Its subcellular location is the cilium axoneme. It is found in the flagellum axoneme. Functionally, microtubule inner protein (MIP) part of the dynein-decorated doublet microtubules (DMTs) in cilia axoneme. Important for proper ciliary and flagellar beating. May act in cooperation with CFAP45 and axonemal dynein subunit DNAH11. May play a role in cell growth and/or survival. The sequence is that of Cilia- and flagella-associated protein 52 from Homo sapiens (Human).